We begin with the raw amino-acid sequence, 161 residues long: Ribonuclease H (161 aa).

Positions 2-141 constitute an RNase H type-1 domain; it reads TNNEIIAATD…ADSLARQAAN (140 aa). Positions 11, 46, 69, and 133 each coordinate Mg(2+).

This sequence belongs to the RNase H family. As to quaternary structure, monomer. Requires Mg(2+) as cofactor.

Its subcellular location is the cytoplasm. It carries out the reaction Endonucleolytic cleavage to 5'-phosphomonoester.. Functionally, endonuclease that specifically degrades the RNA of RNA-DNA hybrids. In Tropheryma whipplei (strain TW08/27) (Whipple's bacillus), this protein is Ribonuclease H.